The following is a 221-amino-acid chain: GTP-binding nuclear protein Ran-3 (221 aa).

Positions 10–174 (DYPSFKLVIV…LYLARKLAGD (165 aa)) constitute a Small GTPase Ran-type domain. Residue 21–28 (DGGTGKTT) coordinates GTP. The segment at 40 to 48 (KKYEPTIGV) is switch-I. GTP contacts are provided by residues G71, 125–128 (NKVD), and 153–155 (SAK). The switch-II stretch occupies residues 71–87 (GQEKFGGLRDGYYIHGQ). The tract at residues 201 to 221 (EAELAAAASQPLPDDDDDTFE) is disordered.

This sequence belongs to the small GTPase superfamily. Ran family. Found in a nuclear export complex with RanGTP, exportin and pre-miRNA. Interacts with RanBP1a and RanBP1b. Interacts with KPNB1.

The protein localises to the nucleus. In terms of biological role, GTP-binding protein involved in nucleocytoplasmic transport. Required for the import of protein into the nucleus and also for RNA export. Involved in chromatin condensation and control of cell cycle. This Arabidopsis thaliana (Mouse-ear cress) protein is GTP-binding nuclear protein Ran-3 (RAN3).